The following is a 398-amino-acid chain: tRNA-specific 2-thiouridylase MnmA (398 aa).

ATP contacts are provided by residues 19–26 and leucine 45; that span reads AMSGGVDS. The active-site Nucleophile is the cysteine 113. Cysteine 113 and cysteine 210 are oxidised to a cystine. Glycine 137 lines the ATP pocket. Residues 160-162 are interaction with tRNA; that stretch reads RDQ. Catalysis depends on cysteine 210, which acts as the Cysteine persulfide intermediate.

It belongs to the MnmA/TRMU family.

Its subcellular location is the cytoplasm. It catalyses the reaction S-sulfanyl-L-cysteinyl-[protein] + uridine(34) in tRNA + AH2 + ATP = 2-thiouridine(34) in tRNA + L-cysteinyl-[protein] + A + AMP + diphosphate + H(+). Its function is as follows. Catalyzes the 2-thiolation of uridine at the wobble position (U34) of tRNA, leading to the formation of s(2)U34. The polypeptide is tRNA-specific 2-thiouridylase MnmA (Rhodopseudomonas palustris (strain HaA2)).